The chain runs to 236 residues: Phosphoribosylaminoimidazole-succinocarboxamide synthase (236 aa).

It belongs to the SAICAR synthetase family.

The enzyme catalyses 5-amino-1-(5-phospho-D-ribosyl)imidazole-4-carboxylate + L-aspartate + ATP = (2S)-2-[5-amino-1-(5-phospho-beta-D-ribosyl)imidazole-4-carboxamido]succinate + ADP + phosphate + 2 H(+). The protein operates within purine metabolism; IMP biosynthesis via de novo pathway; 5-amino-1-(5-phospho-D-ribosyl)imidazole-4-carboxamide from 5-amino-1-(5-phospho-D-ribosyl)imidazole-4-carboxylate: step 1/2. This chain is Phosphoribosylaminoimidazole-succinocarboxamide synthase, found in Campylobacter jejuni subsp. doylei (strain ATCC BAA-1458 / RM4099 / 269.97).